The sequence spans 415 residues: Hydroxysteroid dehydrogenase-like protein 2 (415 aa).

Residues 17–23, K42, and D74 each bind NADP(+); that span reads GASRGIG. Y168 acts as the Proton acceptor in catalysis. K172 serves as a coordination point for NADP(+). Residues 304-412 enclose the SCP2 domain; it reads AGPVSEMFNT…KLEKMMAMMK (109 aa).

It belongs to the short-chain dehydrogenases/reductases (SDR) family.

The protein localises to the peroxisome. It is found in the mitochondrion. In terms of biological role, has apparently no steroid dehydrogenase activity. Might act as a metabolic regulator that affects systemic adaptation to nutritional cues. The chain is Hydroxysteroid dehydrogenase-like protein 2 (hsdl2) from Danio rerio (Zebrafish).